A 173-amino-acid chain; its full sequence is 6,7-dimethyl-8-ribityllumazine synthase (173 aa).

5-amino-6-(D-ribitylamino)uracil is bound by residues phenylalanine 24, 58-60 (ALE), and 82-84 (AVI). 87-88 (ET) is a (2S)-2-hydroxy-3-oxobutyl phosphate binding site. Catalysis depends on histidine 90, which acts as the Proton donor. Asparagine 115 is a 5-amino-6-(D-ribitylamino)uracil binding site. Arginine 129 is a (2S)-2-hydroxy-3-oxobutyl phosphate binding site. Residues 150–173 (TLDQLSDDEEDEEDEDDEDEEERA) form a disordered region. The span at 154–173 (LSDDEEDEEDEDDEDEEERA) shows a compositional bias: acidic residues.

It belongs to the DMRL synthase family.

It carries out the reaction (2S)-2-hydroxy-3-oxobutyl phosphate + 5-amino-6-(D-ribitylamino)uracil = 6,7-dimethyl-8-(1-D-ribityl)lumazine + phosphate + 2 H2O + H(+). The protein operates within cofactor biosynthesis; riboflavin biosynthesis; riboflavin from 2-hydroxy-3-oxobutyl phosphate and 5-amino-6-(D-ribitylamino)uracil: step 1/2. In terms of biological role, catalyzes the formation of 6,7-dimethyl-8-ribityllumazine by condensation of 5-amino-6-(D-ribitylamino)uracil with 3,4-dihydroxy-2-butanone 4-phosphate. This is the penultimate step in the biosynthesis of riboflavin. In Burkholderia mallei (strain NCTC 10247), this protein is 6,7-dimethyl-8-ribityllumazine synthase.